The chain runs to 453 residues: MMQTVLAKIVADKAIWVEARKQQQPLASFQNEVQPSTRHFYDALQGARTAFILECKKASPSKGVICDDFDPARIAAIYKHYASAISVLTDEKYFQGSFDFLPIVSQIAPQPILCKDFIIDPYQIYLARYYQADACLLMLSVLDDEQYRQLAAVAHSLKMGVLTEVSNEEELERAIALGAKVVGINNRDLRDLSIDLNRTRELAPKLGHNVTVISESGINTYAQVRELSHFADGFLIGSALMAHDDLHAAVRRVLLGENKVCGLTRGQDAKAAYDAGAIYGGLIFVATSPRCVNVEQAQEVMAAAPLQYVGVFRNHDIADVLDKAKVLSLVAVQLHGNEDQLYIDTLREALPAHVAIWKALSVGETLPARELQHVDKYVLDNGQGGSGQRFDWSLLNGQSLGNVLLAGGLGADNCVEAAQTGCAGLDFNSAVESQPGIKDARLLASVFQTLRAY.

The interval 1–257 (MMQTVLAKIV…AAVRRVLLGE (257 aa)) is indole-3-glycerol phosphate synthase. Residues 258–453 (NKVCGLTRGQ…ASVFQTLRAY (196 aa)) are N-(5'-phosphoribosyl)anthranilate isomerase.

It in the N-terminal section; belongs to the TrpC family. The protein in the C-terminal section; belongs to the TrpF family. As to quaternary structure, monomer.

The catalysed reaction is N-(5-phospho-beta-D-ribosyl)anthranilate = 1-(2-carboxyphenylamino)-1-deoxy-D-ribulose 5-phosphate. The enzyme catalyses 1-(2-carboxyphenylamino)-1-deoxy-D-ribulose 5-phosphate + H(+) = (1S,2R)-1-C-(indol-3-yl)glycerol 3-phosphate + CO2 + H2O. It functions in the pathway amino-acid biosynthesis; L-tryptophan biosynthesis; L-tryptophan from chorismate: step 3/5. It participates in amino-acid biosynthesis; L-tryptophan biosynthesis; L-tryptophan from chorismate: step 4/5. Functionally, bifunctional enzyme that catalyzes two sequential steps of tryptophan biosynthetic pathway. The first reaction is catalyzed by the isomerase, coded by the TrpF domain; the second reaction is catalyzed by the synthase, coded by the TrpC domain. The sequence is that of Tryptophan biosynthesis protein TrpCF (trpC) from Escherichia coli O157:H7.